The primary structure comprises 251 residues: Probable ATP-dependent transporter ycf16 (251 aa).

Positions Leu8–Leu250 constitute an ABC transporter domain. Gly40 to Ser47 lines the ATP pocket.

Belongs to the ABC transporter superfamily. Ycf16 family.

The protein resides in the plastid. It localises to the chloroplast. This chain is Probable ATP-dependent transporter ycf16 (ycf16), found in Trieres chinensis (Marine centric diatom).